The following is a 262-amino-acid chain: tRNA pseudouridine synthase A (262 aa).

Asp-51 serves as the catalytic Nucleophile. A substrate-binding site is contributed by Tyr-109.

It belongs to the tRNA pseudouridine synthase TruA family. As to quaternary structure, homodimer.

It carries out the reaction uridine(38/39/40) in tRNA = pseudouridine(38/39/40) in tRNA. In terms of biological role, formation of pseudouridine at positions 38, 39 and 40 in the anticodon stem and loop of transfer RNAs. This Aliivibrio salmonicida (strain LFI1238) (Vibrio salmonicida (strain LFI1238)) protein is tRNA pseudouridine synthase A.